Here is a 425-residue protein sequence, read N- to C-terminus: Serine--tRNA ligase (425 aa).

230 to 232 lines the L-serine pocket; sequence TAE. 261–263 contacts ATP; the sequence is RSE. Glu-284 is an L-serine binding site. Residue 348 to 351 coordinates ATP; that stretch reads EISS. Ser-384 contacts L-serine.

It belongs to the class-II aminoacyl-tRNA synthetase family. Type-1 seryl-tRNA synthetase subfamily. As to quaternary structure, homodimer. The tRNA molecule binds across the dimer.

It localises to the cytoplasm. The enzyme catalyses tRNA(Ser) + L-serine + ATP = L-seryl-tRNA(Ser) + AMP + diphosphate + H(+). It carries out the reaction tRNA(Sec) + L-serine + ATP = L-seryl-tRNA(Sec) + AMP + diphosphate + H(+). The protein operates within aminoacyl-tRNA biosynthesis; selenocysteinyl-tRNA(Sec) biosynthesis; L-seryl-tRNA(Sec) from L-serine and tRNA(Sec): step 1/1. Catalyzes the attachment of serine to tRNA(Ser). Is also able to aminoacylate tRNA(Sec) with serine, to form the misacylated tRNA L-seryl-tRNA(Sec), which will be further converted into selenocysteinyl-tRNA(Sec). The protein is Serine--tRNA ligase of Streptococcus agalactiae serotype Ia (strain ATCC 27591 / A909 / CDC SS700).